The primary structure comprises 138 residues: ATP synthase epsilon chain (138 aa).

It belongs to the ATPase epsilon chain family. F-type ATPases have 2 components, CF(1) - the catalytic core - and CF(0) - the membrane proton channel. CF(1) has five subunits: alpha(3), beta(3), gamma(1), delta(1), epsilon(1). CF(0) has three main subunits: a, b and c.

Its subcellular location is the cell inner membrane. Produces ATP from ADP in the presence of a proton gradient across the membrane. This Polaromonas sp. (strain JS666 / ATCC BAA-500) protein is ATP synthase epsilon chain.